The chain runs to 434 residues: Nicotinate phosphoribosyltransferase (434 aa).

A Phosphohistidine; by autocatalysis modification is found at His-242.

The protein belongs to the NAPRTase family. Post-translationally, transiently phosphorylated on a His residue during the reaction cycle. Phosphorylation strongly increases the affinity for substrates and increases the rate of nicotinate D-ribonucleotide production. Dephosphorylation regenerates the low-affinity form of the enzyme, leading to product release.

It catalyses the reaction nicotinate + 5-phospho-alpha-D-ribose 1-diphosphate + ATP + H2O = nicotinate beta-D-ribonucleotide + ADP + phosphate + diphosphate. The protein operates within cofactor biosynthesis; NAD(+) biosynthesis; nicotinate D-ribonucleotide from nicotinate: step 1/1. Functionally, catalyzes the synthesis of beta-nicotinate D-ribonucleotide from nicotinate and 5-phospho-D-ribose 1-phosphate at the expense of ATP. The chain is Nicotinate phosphoribosyltransferase from Bartonella quintana (strain Toulouse) (Rochalimaea quintana).